The chain runs to 369 residues: Anthranilate phosphoribosyltransferase (369 aa).

5-phospho-alpha-D-ribose 1-diphosphate-binding positions include G99, 102–103, 109–112, 127–135, and S139; these read GD, NVST, and KHGNRGVSS. Residue G99 participates in anthranilate binding. S111 contributes to the Mg(2+) binding site. An anthranilate-binding site is contributed by N130. R185 contacts anthranilate. Residues D244 and E245 each coordinate Mg(2+).

The protein belongs to the anthranilate phosphoribosyltransferase family. As to quaternary structure, homodimer. Mg(2+) is required as a cofactor.

It catalyses the reaction N-(5-phospho-beta-D-ribosyl)anthranilate + diphosphate = 5-phospho-alpha-D-ribose 1-diphosphate + anthranilate. It participates in amino-acid biosynthesis; L-tryptophan biosynthesis; L-tryptophan from chorismate: step 2/5. Catalyzes the transfer of the phosphoribosyl group of 5-phosphorylribose-1-pyrophosphate (PRPP) to anthranilate to yield N-(5'-phosphoribosyl)-anthranilate (PRA). The chain is Anthranilate phosphoribosyltransferase from Psychrobacter sp. (strain PRwf-1).